The sequence spans 329 residues: Biotin synthase (329 aa).

The 230-residue stretch at 46–275 (YYGNKVKLNM…TKEIRISGGR (230 aa)) folds into the Radical SAM core domain. The [4Fe-4S] cluster site is built by C64, C68, and C71. Residues C108, C140, C200, and R270 each coordinate [2Fe-2S] cluster.

Belongs to the radical SAM superfamily. Biotin synthase family. As to quaternary structure, homodimer. Requires [4Fe-4S] cluster as cofactor. It depends on [2Fe-2S] cluster as a cofactor.

It carries out the reaction (4R,5S)-dethiobiotin + (sulfur carrier)-SH + 2 reduced [2Fe-2S]-[ferredoxin] + 2 S-adenosyl-L-methionine = (sulfur carrier)-H + biotin + 2 5'-deoxyadenosine + 2 L-methionine + 2 oxidized [2Fe-2S]-[ferredoxin]. It functions in the pathway cofactor biosynthesis; biotin biosynthesis; biotin from 7,8-diaminononanoate: step 2/2. Catalyzes the conversion of dethiobiotin (DTB) to biotin by the insertion of a sulfur atom into dethiobiotin via a radical-based mechanism. The chain is Biotin synthase from Anoxybacillus flavithermus (strain DSM 21510 / WK1).